A 236-amino-acid polypeptide reads, in one-letter code: Pyridoxine 5'-phosphate synthase (236 aa).

Asn-6 serves as a coordination point for 3-amino-2-oxopropyl phosphate. 8-9 is a binding site for 1-deoxy-D-xylulose 5-phosphate; it reads DH. A 3-amino-2-oxopropyl phosphate-binding site is contributed by Arg-17. His-42 (proton acceptor) is an active-site residue. Positions 44 and 49 each coordinate 1-deoxy-D-xylulose 5-phosphate. Catalysis depends on Glu-69, which acts as the Proton acceptor. A 1-deoxy-D-xylulose 5-phosphate-binding site is contributed by Thr-99. Residue His-190 is the Proton donor of the active site. Residues Gly-191 and 212-213 each bind 3-amino-2-oxopropyl phosphate; that span reads GH.

This sequence belongs to the PNP synthase family. As to quaternary structure, homooctamer; tetramer of dimers.

The protein localises to the cytoplasm. It carries out the reaction 3-amino-2-oxopropyl phosphate + 1-deoxy-D-xylulose 5-phosphate = pyridoxine 5'-phosphate + phosphate + 2 H2O + H(+). It participates in cofactor biosynthesis; pyridoxine 5'-phosphate biosynthesis; pyridoxine 5'-phosphate from D-erythrose 4-phosphate: step 5/5. Its function is as follows. Catalyzes the complicated ring closure reaction between the two acyclic compounds 1-deoxy-D-xylulose-5-phosphate (DXP) and 3-amino-2-oxopropyl phosphate (1-amino-acetone-3-phosphate or AAP) to form pyridoxine 5'-phosphate (PNP) and inorganic phosphate. The polypeptide is Pyridoxine 5'-phosphate synthase (Chlorobium phaeobacteroides (strain DSM 266 / SMG 266 / 2430)).